A 277-amino-acid polypeptide reads, in one-letter code: Outer kinetochore KNL1 complex subunit ZWINT (277 aa).

Residues 80 to 155 (ASEDTSRQKA…MEKRRAVQNQ (76 aa)) are interaction with NDC80 and ZW10. Residues 104–217 (REHVEAIKIG…RYQTFLQLLY (114 aa)) adopt a coiled-coil conformation. The interval 228–277 (AEAEAENLPDDKPQQPTRPQEQSTGDTMGRDPGVSFKAVGLQPAGDVNLP) is disordered. The span at 241–253 (QQPTRPQEQSTGD) shows a compositional bias: polar residues.

As to quaternary structure, component of the KNL1 complex composed of KNL1 and ZWINT. Part of the ten-subunit outer kinetochore KMN network that includes the KNL1, MIS12 and NDC80 complexes; a bioriented kinetochore contains approximately 150 copies of the network. Interacts with the MIS12 complex subunits MIS12 DSN1, and PMF1. Interacts with the NDC80 complex subunit NDC80 during mitosis. Interacts with ZW10. Interacts with CETN3.

Its subcellular location is the nucleus. It is found in the chromosome. The protein resides in the centromere. It localises to the kinetochore. Its function is as follows. Acts as a component of the outer kinetochore KNL1 complex that serves as a docking point for spindle assembly checkpoint components and mediates microtubule-kinetochore interactions. Kinetochores, consisting of a centromere-associated inner segment and a microtubule-contacting outer segment, play a crucial role in chromosome segregation by mediating the physical connection between centromeric DNA and spindle microtubules. The outer kinetochore is made up of the ten-subunit KMN network, comprising the MIS12, NDC80 and KNL1 complexes, and auxiliary microtubule-associated components; together they connect the outer kinetochore with the inner kinetochore, bind microtubules, and mediate interactions with mitotic checkpoint proteins that delay anaphase until chromosomes are bioriented on the spindle. Targets the RZZ complex to the kinetochore at prometaphase. Recruits MAD2L1 to the kinetochore, but is not required for BUB1B localization. In addition to orienting mitotic chromosomes, it is also essential for alignment of homologous chromosomes during meiotic metaphase I. In meiosis I, required to activate the spindle assembly checkpoint at unattached kinetochores to correct erroneous kinetochore-microtubule attachments. In Homo sapiens (Human), this protein is Outer kinetochore KNL1 complex subunit ZWINT (ZWINT).